The primary structure comprises 494 residues: ETS translocation variant 4 (494 aa).

2 disordered regions span residues 82–113 (ENSVAFHSPPVKIKKEPQSPGSDPSQSCSHKQ) and 139–201 (AGGS…SGSA). Positions 100 to 113 (SPGSDPSQSCSHKQ) are enriched in polar residues. The span at 176 to 187 (SSSQSHACHSHS) shows a compositional bias: low complexity. The span at 188-197 (YPMNPSSRFP) shows a compositional bias: polar residues. The segment at residues 350–430 (LQLWQFLVAL…AGERYVYKFV (81 aa)) is a DNA-binding region (ETS).

Belongs to the ETS family. In terms of processing, phosphorylated. In the embryo, expressed ubiquitously until the late blastula stage, in the marginal zone of gastrula stages, in the presumptive forebrain and hindbrain and in the trunk region of early somite stages. In later stages, also expressed in Rohon-Beard neurons, epiphysis, lateral line placodes, pectoral fin buds, developing lens and heart.

Its subcellular location is the nucleus. Its function is as follows. Transcriptional activator that binds to the (5'-CCGGA[AT]-3') motif. May control the acquisition of specific cell fates at an early stage during development of the somites and nervous system. May mediate the cellular effects of the fibroblast growth factors on embryogenesis. The chain is ETS translocation variant 4 (etv4) from Danio rerio (Zebrafish).